The following is a 205-amino-acid chain: DNA-directed RNA polymerase RPB5 homolog (205 aa).

It belongs to the archaeal RpoH/eukaryotic RPB5 RNA polymerase subunit family. In terms of assembly, part of the viral DNA-directed RNA polymerase that consists of 8 polII-like subunits (RPB1, RPB2, RPB3, RPB5, RPB6, RPB7, RPB9, RPB10), a capping enzyme and a termination factor.

The protein localises to the host cytoplasm. It localises to the virion. In terms of biological role, component of the DNA-directed RNA polymerase (RNAP) that catalyzes the transcription in the cytoplasm of viral DNA into RNA using the four ribonucleoside triphosphates as substrates. This Ornithodoros (relapsing fever ticks) protein is DNA-directed RNA polymerase RPB5 homolog.